The chain runs to 289 residues: ATP synthase gamma chain (289 aa).

The protein belongs to the ATPase gamma chain family. F-type ATPases have 2 components, CF(1) - the catalytic core - and CF(0) - the membrane proton channel. CF(1) has five subunits: alpha(3), beta(3), gamma(1), delta(1), epsilon(1). CF(0) has three main subunits: a, b and c.

Its subcellular location is the cell inner membrane. Produces ATP from ADP in the presence of a proton gradient across the membrane. The gamma chain is believed to be important in regulating ATPase activity and the flow of protons through the CF(0) complex. This Haemophilus influenzae (strain PittGG) protein is ATP synthase gamma chain.